A 305-amino-acid polypeptide reads, in one-letter code: Ornithine carbamoyltransferase (305 aa).

Residues 53–56 (STRT), Q80, R104, and 131–134 (HPCQ) contribute to the carbamoyl phosphate site. Residues N162, D219, and 223–224 (SM) contribute to the L-ornithine site. Residues 259 to 260 (CL) and R287 contribute to the carbamoyl phosphate site.

This sequence belongs to the aspartate/ornithine carbamoyltransferase superfamily. OTCase family.

It is found in the cytoplasm. It carries out the reaction carbamoyl phosphate + L-ornithine = L-citrulline + phosphate + H(+). Its pathway is amino-acid biosynthesis; L-arginine biosynthesis; L-arginine from L-ornithine and carbamoyl phosphate: step 1/3. Reversibly catalyzes the transfer of the carbamoyl group from carbamoyl phosphate (CP) to the N(epsilon) atom of ornithine (ORN) to produce L-citrulline. The polypeptide is Ornithine carbamoyltransferase (Psychrobacter cryohalolentis (strain ATCC BAA-1226 / DSM 17306 / VKM B-2378 / K5)).